Consider the following 510-residue polypeptide: 2-isopropylmalate synthase (510 aa).

A Pyruvate carboxyltransferase domain is found at 5-267; sequence LIIFDTTLRD…DTRIDSVHIV (263 aa). D14, H202, H204, and N238 together coordinate Mn(2+). Residues 392–510 are regulatory domain; it reads KLLSLTAHSE…SKLERAHPQV (119 aa).

It belongs to the alpha-IPM synthase/homocitrate synthase family. LeuA type 1 subfamily. Homodimer. Mn(2+) serves as cofactor.

The protein resides in the cytoplasm. The enzyme catalyses 3-methyl-2-oxobutanoate + acetyl-CoA + H2O = (2S)-2-isopropylmalate + CoA + H(+). The protein operates within amino-acid biosynthesis; L-leucine biosynthesis; L-leucine from 3-methyl-2-oxobutanoate: step 1/4. Functionally, catalyzes the condensation of the acetyl group of acetyl-CoA with 3-methyl-2-oxobutanoate (2-ketoisovalerate) to form 3-carboxy-3-hydroxy-4-methylpentanoate (2-isopropylmalate). The chain is 2-isopropylmalate synthase from Nitrosospira multiformis (strain ATCC 25196 / NCIMB 11849 / C 71).